A 416-amino-acid polypeptide reads, in one-letter code: Serine hydroxymethyltransferase 1 (416 aa).

Residues leucine 121 and 125 to 127 contribute to the (6S)-5,6,7,8-tetrahydrofolate site; that span reads GHL. Lysine 229 is modified (N6-(pyridoxal phosphate)lysine). (6S)-5,6,7,8-tetrahydrofolate contacts are provided by residues glutamate 245 and 354–356; that span reads SPF.

Belongs to the SHMT family. As to quaternary structure, homodimer. Pyridoxal 5'-phosphate serves as cofactor.

It localises to the cytoplasm. The catalysed reaction is (6R)-5,10-methylene-5,6,7,8-tetrahydrofolate + glycine + H2O = (6S)-5,6,7,8-tetrahydrofolate + L-serine. Its pathway is one-carbon metabolism; tetrahydrofolate interconversion. It functions in the pathway amino-acid biosynthesis; glycine biosynthesis; glycine from L-serine: step 1/1. In terms of biological role, catalyzes the reversible interconversion of serine and glycine with tetrahydrofolate (THF) serving as the one-carbon carrier. This reaction serves as the major source of one-carbon groups required for the biosynthesis of purines, thymidylate, methionine, and other important biomolecules. Also exhibits THF-independent aldolase activity toward beta-hydroxyamino acids, producing glycine and aldehydes, via a retro-aldol mechanism. The sequence is that of Serine hydroxymethyltransferase 1 from Vibrio vulnificus (strain CMCP6).